The following is a 131-amino-acid chain: Norrin (131 aa).

Residues 1–24 form the signal peptide; it reads MRNHVLAASISMLSLLAIMGDTDS. Cystine bridges form between C37–C94, C53–C108, C63–C124, and C67–C126. A CTCK domain is found at 37–130; it reads CMRHHYVDSI…ILSCHCEECS (94 aa).

Homodimer; disulfide-linked. Component of a complex, at least composed of TSPAN12, FZD4, LRP5/6 and norrin (NDP). Binds FZD4 with high affinity. Interacts with LRP6 (via Beta-propellers 1 and 2). In terms of tissue distribution, expressed in the outer nuclear, inner nuclear and ganglion cell layers of the retina.

It localises to the secreted. Activates the canonical Wnt signaling pathway through FZD4 and LRP5 coreceptor. Plays a central role in retinal vascularization by acting as a ligand for FZD4 that signals via stabilizing beta-catenin (CTNNB1) and activating LEF/TCF-mediated transcriptional programs. Acts in concert with TSPAN12 to activate FZD4 independently of the Wnt-dependent activation of FZD4, suggesting the existence of a Wnt-independent signaling that also promote accumulation the beta-catenin (CTNNB1). May be involved in a pathway that regulates neural cell differentiation and proliferation. Possible role in neuroectodermal cell-cell interaction. The polypeptide is Norrin (Ndp) (Mus musculus (Mouse)).